A 38-amino-acid polypeptide reads, in one-letter code: Large ribosomal subunit protein bL36 (38 aa).

Belongs to the bacterial ribosomal protein bL36 family.

The sequence is that of Large ribosomal subunit protein bL36 from Pseudoalteromonas atlantica (strain T6c / ATCC BAA-1087).